Reading from the N-terminus, the 354-residue chain is Peptide chain release factor 1 (354 aa).

At Gln230 the chain carries N5-methylglutamine.

This sequence belongs to the prokaryotic/mitochondrial release factor family. Post-translationally, methylated by PrmC. Methylation increases the termination efficiency of RF1.

Its subcellular location is the cytoplasm. In terms of biological role, peptide chain release factor 1 directs the termination of translation in response to the peptide chain termination codons UAG and UAA. The chain is Peptide chain release factor 1 from Novosphingobium aromaticivorans (strain ATCC 700278 / DSM 12444 / CCUG 56034 / CIP 105152 / NBRC 16084 / F199).